Reading from the N-terminus, the 61-residue chain is MDPNCSCTAGESCTCAGSCKCKDCKCASCKKSCCSCCPVGCAKCAQGCVCKGASDKCSCCA.

M1 carries the N-acetylmethionine modification. The interval 1–29 (MDPNCSCTAGESCTCAGSCKCKDCKCASC) is beta. A divalent metal cation-binding residues include C5, C7, C13, C15, C19, C21, C24, C26, C29, C33, C34, C36, C37, C41, C44, C48, C50, and C57. Residues 30–61 (KKSCCSCCPVGCAKCAQGCVCKGASDKCSCCA) form an alpha region. The residue at position 58 (S58) is a Phosphoserine. A divalent metal cation-binding residues include C59 and C60.

Belongs to the metallothionein superfamily. Type 1 family. Interacts with EOLA1.

Metallothioneins have a high content of cysteine residues that bind various heavy metals; these proteins are transcriptionally regulated by both heavy metals and glucocorticoids. In Ovis aries (Sheep), this protein is Metallothionein-2 (MT2A).